Here is a 99-residue protein sequence, read N- to C-terminus: Transcription factor 1 (99 aa).

May be involved in preference for HM-URA DNA regions lie at residues 52–77 and 90–99; these read PVARQARKGFNPQTQEALEIAPSVGV and EGLKYEDFAK. 2 DNA-binding regions span residues F61 and 93–94; that span reads KY.

It belongs to the bacterial histone-like protein family. Homodimer.

Functionally, selectively binds to and inhibits the transcription of hydroxymethyluracil-(hmUra)-containing DNA, such as SP01 DNA, by RNA polymerase in vitro. This Bacillus phage SP01 (Bacteriophage SP01) protein is Transcription factor 1 (TF1).